The chain runs to 907 residues: Lipoxygenase 1, chloroplastic (907 aa).

The transit peptide at 1–49 (MALAKQIMGASLMDQKTSVFGSNLCLNHVLVNKHRLRLRKTRKNGSMVV) directs the protein to the chloroplast. Positions 85-209 (DFFKDTIFRK…DLPNPRIFFT (125 aa)) constitute a PLAT domain. One can recognise a Lipoxygenase domain in the interval 212–907 (PYLPDETPVG…CRGVPNSISI (696 aa)). 5 residues coordinate Fe cation: His567, His572, His758, Asn762, and Ile907.

Belongs to the lipoxygenase family. Requires Fe cation as cofactor. Confined to glandular trichomes in flowers, and, at low levels, in leaves.

Its subcellular location is the plastid. It is found in the chloroplast. The catalysed reaction is (9Z,12Z,15Z)-octadecatrienoate + O2 = 13-hydroperoxy-(9Z,11E,15Z)-octadecatrienoate. Its pathway is lipid metabolism; oxylipin biosynthesis. The protein operates within isoprenoid biosynthesis. Functionally, component of the monoterpenoid pyrethrins biosynthesis; pyrethrins are widely used plant-derived pesticide. Plant lipoxygenases may be involved in a number of diverse aspects of plant physiology including growth and development, pest resistance, and senescence or responses to wounding. Catalyzes the hydroperoxidation of lipids containing a cis,cis-1,4-pentadiene structure. Mediates the peroxidation of linolenic acid leading to the production of 13-hydroperoxylinolenic acid. The sequence is that of Lipoxygenase 1, chloroplastic from Tanacetum cinerariifolium (Dalmatian daisy).